Reading from the N-terminus, the 226-residue chain is uncharacterized protein (226 aa).

The 137-residue stretch at 71-207 (EPDDITVYFD…ADGLAKKILS (137 aa)) folds into the RNase H type-1 domain.

This is an uncharacterized protein from Bacillus subtilis (strain 168).